A 334-amino-acid polypeptide reads, in one-letter code: Phosphate acyltransferase (334 aa).

This sequence belongs to the PlsX family. Homodimer. Probably interacts with PlsY.

Its subcellular location is the cytoplasm. The catalysed reaction is a fatty acyl-[ACP] + phosphate = an acyl phosphate + holo-[ACP]. Its pathway is lipid metabolism; phospholipid metabolism. In terms of biological role, catalyzes the reversible formation of acyl-phosphate (acyl-PO(4)) from acyl-[acyl-carrier-protein] (acyl-ACP). This enzyme utilizes acyl-ACP as fatty acyl donor, but not acyl-CoA. The chain is Phosphate acyltransferase from Streptococcus thermophilus (strain ATCC BAA-491 / LMD-9).